The primary structure comprises 435 residues: GTPase Der (435 aa).

EngA-type G domains are found at residues Pro4–Ala167 and Ile175–Asn350. GTP-binding positions include Gly10–Ser17, Asp57–Ile61, Asn119–Asp122, Gly181–Ser188, Asp228–Ile232, and Asn293–Asp296. One can recognise a KH-like domain in the interval Gln351–Lys435.

This sequence belongs to the TRAFAC class TrmE-Era-EngA-EngB-Septin-like GTPase superfamily. EngA (Der) GTPase family. Associates with the 50S ribosomal subunit.

Its function is as follows. GTPase that plays an essential role in the late steps of ribosome biogenesis. This chain is GTPase Der, found in Lactobacillus delbrueckii subsp. bulgaricus (strain ATCC 11842 / DSM 20081 / BCRC 10696 / JCM 1002 / NBRC 13953 / NCIMB 11778 / NCTC 12712 / WDCM 00102 / Lb 14).